The following is a 309-amino-acid chain: L-2-keto-3-deoxyarabonate dehydratase (309 aa).

The Schiff-base intermediate with substrate role is filled by Lys-171.

It belongs to the DapA family. In terms of assembly, homodimer.

The catalysed reaction is 2-dehydro-3-deoxy-L-arabinonate = 2,5-dioxopentanoate + H2O. Its function is as follows. Catalyzes the dehydration of L-2-keto-3-deoxyarabonate (L-KDA) to alpha-ketoglutaric semialdehyde (alphaKGSA). Is involved in a degradation pathway of L-arabinose that allows A.brasilense to grow on L-arabinose as a sole carbon source. The sequence is that of L-2-keto-3-deoxyarabonate dehydratase (araD) from Azospirillum brasilense.